Here is an 82-residue protein sequence, read N- to C-terminus: Small ribosomal subunit protein bS16 (82 aa).

The protein belongs to the bacterial ribosomal protein bS16 family.

The polypeptide is Small ribosomal subunit protein bS16 (Natranaerobius thermophilus (strain ATCC BAA-1301 / DSM 18059 / JW/NM-WN-LF)).